The chain runs to 60 residues: MSKLKITLKKSKIGRIEKHIRTCEALGLHKIGQSVIKEDNDAIRGMIRHIAFMVDVEEVK.

The protein belongs to the universal ribosomal protein uL30 family. As to quaternary structure, part of the 50S ribosomal subunit.

The chain is Large ribosomal subunit protein uL30 from Finegoldia magna (strain ATCC 29328 / DSM 20472 / WAL 2508) (Peptostreptococcus magnus).